The primary structure comprises 789 residues: Ribonucleoside-diphosphate reductase large subunit (789 aa).

Residues threonine 207, 222-223, glycine 253, 435-439, and 620-624 each bind substrate; these read SC, NLCTE, and PTVSS. Residues cysteine 223 and cysteine 452 are joined by a disulfide bond. The active-site Proton acceptor is asparagine 435. Cysteine 437 acts as the Cysteine radical intermediate in catalysis. The active-site Proton acceptor is the glutamate 439.

This sequence belongs to the ribonucleoside diphosphate reductase large chain family. In terms of assembly, heterotetramer composed of a homodimer of the large subunit (R1) and a homodimer of the small subunit (R2). Larger multisubunit protein complex are also active, composed of (R1)n(R2)n.

It catalyses the reaction a 2'-deoxyribonucleoside 5'-diphosphate + [thioredoxin]-disulfide + H2O = a ribonucleoside 5'-diphosphate + [thioredoxin]-dithiol. Ribonucleoside-diphosphate reductase holoenzyme provides the precursors necessary for viral DNA synthesis. Allows virus growth in non-dividing cells, as well as reactivation from latency in infected hosts. Catalyzes the biosynthesis of deoxyribonucleotides from the corresponding ribonucleotides. This Equus caballus (Horse) protein is Ribonucleoside-diphosphate reductase large subunit.